A 250-amino-acid polypeptide reads, in one-letter code: Probable transcriptional regulatory protein Lferr_0060 (250 aa).

Belongs to the TACO1 family.

The protein localises to the cytoplasm. This Acidithiobacillus ferrooxidans (strain ATCC 53993 / BNL-5-31) (Leptospirillum ferrooxidans (ATCC 53993)) protein is Probable transcriptional regulatory protein Lferr_0060.